A 209-amino-acid polypeptide reads, in one-letter code: Large ribosomal subunit protein uL3 (209 aa).

Gln-150 is modified (N5-methylglutamine).

The protein belongs to the universal ribosomal protein uL3 family. In terms of assembly, part of the 50S ribosomal subunit. Forms a cluster with proteins L14 and L19. Post-translationally, methylated by PrmB.

One of the primary rRNA binding proteins, it binds directly near the 3'-end of the 23S rRNA, where it nucleates assembly of the 50S subunit. The sequence is that of Large ribosomal subunit protein uL3 from Pasteurella multocida (strain Pm70).